The chain runs to 221 residues: 7-carboxy-7-deazaguanine synthase (221 aa).

Residues 12–14 (ING) and arginine 27 each bind substrate. In terms of domain architecture, Radical SAM core spans 18–216 (KSGQLSVFIR…IQIHKIIWNP (199 aa)). The [4Fe-4S] cluster site is built by cysteine 31, cysteine 35, and cysteine 38. A Mg(2+)-binding site is contributed by threonine 40. Substrate is bound at residue threonine 73. S-adenosyl-L-methionine is bound at residue glycine 75.

It belongs to the radical SAM superfamily. 7-carboxy-7-deazaguanine synthase family. Homodimer. [4Fe-4S] cluster serves as cofactor. S-adenosyl-L-methionine is required as a cofactor. The cofactor is Mg(2+).

The catalysed reaction is 6-carboxy-5,6,7,8-tetrahydropterin + H(+) = 7-carboxy-7-deazaguanine + NH4(+). It participates in purine metabolism; 7-cyano-7-deazaguanine biosynthesis. In terms of biological role, catalyzes the complex heterocyclic radical-mediated conversion of 6-carboxy-5,6,7,8-tetrahydropterin (CPH4) to 7-carboxy-7-deazaguanine (CDG), a step common to the biosynthetic pathways of all 7-deazapurine-containing compounds. The protein is 7-carboxy-7-deazaguanine synthase of Clostridium acetobutylicum (strain ATCC 824 / DSM 792 / JCM 1419 / IAM 19013 / LMG 5710 / NBRC 13948 / NRRL B-527 / VKM B-1787 / 2291 / W).